We begin with the raw amino-acid sequence, 810 residues long: Lon protease (810 aa).

The region spanning L8–L201 is the Lon N-terminal domain. G353 to T360 contacts ATP. In terms of domain architecture, Lon proteolytic spans N589–E770. Active-site residues include S676 and K719.

The protein belongs to the peptidase S16 family. As to quaternary structure, homohexamer. Organized in a ring with a central cavity.

It is found in the cytoplasm. The enzyme catalyses Hydrolysis of proteins in presence of ATP.. Its function is as follows. ATP-dependent serine protease that mediates the selective degradation of mutant and abnormal proteins as well as certain short-lived regulatory proteins. Required for cellular homeostasis and for survival from DNA damage and developmental changes induced by stress. Degrades polypeptides processively to yield small peptide fragments that are 5 to 10 amino acids long. Binds to DNA in a double-stranded, site-specific manner. This is Lon protease from Desulforamulus reducens (strain ATCC BAA-1160 / DSM 100696 / MI-1) (Desulfotomaculum reducens).